A 210-amino-acid polypeptide reads, in one-letter code: Pyridoxine/pyridoxamine 5'-phosphate oxidase (210 aa).

Substrate-binding positions include 7–10 and Lys65; that span reads REDY. Residues 60-65, 75-76, Arg81, Lys82, and Gln104 contribute to the FMN site; these read RMVLLK and FT. Positions 122, 126, and 130 each coordinate substrate. FMN contacts are provided by residues 139-140 and Trp183; that span reads QS. Residue 189 to 191 coordinates substrate; sequence RLH. Arg193 serves as a coordination point for FMN.

This sequence belongs to the pyridoxamine 5'-phosphate oxidase family. As to quaternary structure, homodimer. The cofactor is FMN.

The catalysed reaction is pyridoxamine 5'-phosphate + O2 + H2O = pyridoxal 5'-phosphate + H2O2 + NH4(+). It carries out the reaction pyridoxine 5'-phosphate + O2 = pyridoxal 5'-phosphate + H2O2. Its pathway is cofactor metabolism; pyridoxal 5'-phosphate salvage; pyridoxal 5'-phosphate from pyridoxamine 5'-phosphate: step 1/1. The protein operates within cofactor metabolism; pyridoxal 5'-phosphate salvage; pyridoxal 5'-phosphate from pyridoxine 5'-phosphate: step 1/1. Functionally, catalyzes the oxidation of either pyridoxine 5'-phosphate (PNP) or pyridoxamine 5'-phosphate (PMP) into pyridoxal 5'-phosphate (PLP). In Neisseria meningitidis serogroup B (strain ATCC BAA-335 / MC58), this protein is Pyridoxine/pyridoxamine 5'-phosphate oxidase.